A 734-amino-acid chain; its full sequence is Histone-lysine N-methyltransferase SET9 (734 aa).

An SET domain is found at Cys-116–Ser-230. Disordered stretches follow at residues Phe-343 to Thr-459, Ala-523 to Ala-543, Ala-567 to Val-591, and Arg-681 to Gln-734. Basic and acidic residues predominate over residues Glu-407–Pro-418. Residues Ser-527–Ala-543 are compositionally biased toward polar residues. The segment covering Ser-578–Arg-587 has biased composition (basic and acidic residues).

This sequence belongs to the class V-like SAM-binding methyltransferase superfamily. Histone-lysine methyltransferase family. Suvar4-20 subfamily.

The protein localises to the nucleus. It is found in the chromosome. The catalysed reaction is L-lysyl(20)-[histone H4] + 3 S-adenosyl-L-methionine = N(6),N(6),N(6)-trimethyl-L-lysyl(20)-[histone H4] + 3 S-adenosyl-L-homocysteine + 3 H(+). Functionally, histone methyltransferase that trimethylates 'Lys-20' of histone H4 to form H4K20me3. This is Histone-lysine N-methyltransferase SET9 (SET9) from Chaetomium globosum (strain ATCC 6205 / CBS 148.51 / DSM 1962 / NBRC 6347 / NRRL 1970) (Soil fungus).